The following is a 586-amino-acid chain: Beta-fructofuranosidase, insoluble isoenzyme 3 (586 aa).

The N-terminal stretch at 1 to 26 (MATARARAALVFVALLQMAAVVVVRA) is a signal peptide. Residue aspartate 61 is part of the active site. N-linked (GlcNAc...) asparagine glycans are attached at residues asparagine 154, asparagine 179, asparagine 341, asparagine 390, and asparagine 479.

This sequence belongs to the glycosyl hydrolase 32 family.

It localises to the secreted. The protein localises to the extracellular space. Its subcellular location is the apoplast. The protein resides in the cell wall. It catalyses the reaction Hydrolysis of terminal non-reducing beta-D-fructofuranoside residues in beta-D-fructofuranosides.. This chain is Beta-fructofuranosidase, insoluble isoenzyme 3 (CIN3), found in Oryza sativa subsp. indica (Rice).